We begin with the raw amino-acid sequence, 238 residues long: Polynucleotide 3'-phosphatase (238 aa).

It belongs to the DNA 3' phosphatase family.

The protein localises to the nucleus. It carries out the reaction a 3'end (2'-deoxyribonucleotide 3'-phosphate)-DNA + H2O = a 3'-end 2'-deoxyribonucleotide-DNA + phosphate. Its function is as follows. Dephosphorylate DNA's 3'-phosphate termini. Has a role in the repair of breaks in single-stranded DNA. This is Polynucleotide 3'-phosphatase (TPP1) from Saccharomyces cerevisiae (strain ATCC 204508 / S288c) (Baker's yeast).